Consider the following 414-residue polypeptide: 2,3-diketo-5-methylthiopentyl-1-phosphate enolase (414 aa).

Residue lysine 99 is the Proton acceptor of the active site. Substrate is bound by residues lysine 148, 174–177, histidine 265, glycine 338, and 360–361; these read KDDE and GG. Residues lysine 174, aspartate 176, and glutamate 177 each coordinate Mg(2+). Position 174 is an N6-carboxylysine (lysine 174).

The protein belongs to the RuBisCO large chain family. Type IV subfamily. As to quaternary structure, homodimer. It depends on Mg(2+) as a cofactor.

The enzyme catalyses 5-methylsulfanyl-2,3-dioxopentyl phosphate = 2-hydroxy-5-methylsulfanyl-3-oxopent-1-enyl phosphate. Its pathway is amino-acid biosynthesis; L-methionine biosynthesis via salvage pathway; L-methionine from S-methyl-5-thio-alpha-D-ribose 1-phosphate: step 3/6. Catalyzes the enolization of 2,3-diketo-5-methylthiopentyl-1-phosphate (DK-MTP-1-P) into 2-hydroxy-3-keto-5-methylthiopentenyl-1-phosphate (HK-MTPenyl-1-P). The protein is 2,3-diketo-5-methylthiopentyl-1-phosphate enolase of Bacillus cereus (strain ATCC 14579 / DSM 31 / CCUG 7414 / JCM 2152 / NBRC 15305 / NCIMB 9373 / NCTC 2599 / NRRL B-3711).